A 306-amino-acid polypeptide reads, in one-letter code: 4-hydroxy-tetrahydrodipicolinate synthase (306 aa).

Residue T49 participates in pyruvate binding. The active-site Proton donor/acceptor is the Y136. K164 acts as the Schiff-base intermediate with substrate in catalysis. I207 is a pyruvate binding site.

It belongs to the DapA family. Homotetramer; dimer of dimers.

It localises to the cytoplasm. The catalysed reaction is L-aspartate 4-semialdehyde + pyruvate = (2S,4S)-4-hydroxy-2,3,4,5-tetrahydrodipicolinate + H2O + H(+). Its pathway is amino-acid biosynthesis; L-lysine biosynthesis via DAP pathway; (S)-tetrahydrodipicolinate from L-aspartate: step 3/4. Catalyzes the condensation of (S)-aspartate-beta-semialdehyde [(S)-ASA] and pyruvate to 4-hydroxy-tetrahydrodipicolinate (HTPA). The sequence is that of 4-hydroxy-tetrahydrodipicolinate synthase from Haloarcula marismortui (strain ATCC 43049 / DSM 3752 / JCM 8966 / VKM B-1809) (Halobacterium marismortui).